Consider the following 202-residue polypeptide: Small ribosomal subunit protein uS5 (202 aa).

The span at 1 to 13 shows a compositional bias: gly residues; sequence MPGQQRRGGGSGG. The tract at residues 1 to 31 is disordered; it reads MPGQQRRGGGSGGSDRRERRDRSGGGPAQEK. Residues 14–23 are compositionally biased toward basic and acidic residues; that stretch reads SDRRERRDRS. Residues 34-97 form the S5 DRBM domain; the sequence is YVERVVAINR…EEAKKHFFKV (64 aa).

Belongs to the universal ribosomal protein uS5 family. As to quaternary structure, part of the 30S ribosomal subunit. Contacts proteins S4 and S8.

With S4 and S12 plays an important role in translational accuracy. Functionally, located at the back of the 30S subunit body where it stabilizes the conformation of the head with respect to the body. This is Small ribosomal subunit protein uS5 from Frankia alni (strain DSM 45986 / CECT 9034 / ACN14a).